The following is a 490-amino-acid chain: Bifunctional protein HldE (490 aa).

The segment at 1 to 330 (MFDFDDLSQA…RKILPHAYRA (330 aa)) is ribokinase. 205–208 (NRKE) lines the ATP pocket. Residue Asp-275 is part of the active site. The cytidylyltransferase stretch occupies residues 358–490 (FTNGCFDILH…LVDRARSDQR (133 aa)).

The protein in the N-terminal section; belongs to the carbohydrate kinase PfkB family. This sequence in the C-terminal section; belongs to the cytidylyltransferase family. In terms of assembly, homodimer.

The catalysed reaction is D-glycero-beta-D-manno-heptose 7-phosphate + ATP = D-glycero-beta-D-manno-heptose 1,7-bisphosphate + ADP + H(+). The enzyme catalyses D-glycero-beta-D-manno-heptose 1-phosphate + ATP + H(+) = ADP-D-glycero-beta-D-manno-heptose + diphosphate. It participates in nucleotide-sugar biosynthesis; ADP-L-glycero-beta-D-manno-heptose biosynthesis; ADP-L-glycero-beta-D-manno-heptose from D-glycero-beta-D-manno-heptose 7-phosphate: step 1/4. The protein operates within nucleotide-sugar biosynthesis; ADP-L-glycero-beta-D-manno-heptose biosynthesis; ADP-L-glycero-beta-D-manno-heptose from D-glycero-beta-D-manno-heptose 7-phosphate: step 3/4. In terms of biological role, catalyzes the phosphorylation of D-glycero-D-manno-heptose 7-phosphate at the C-1 position to selectively form D-glycero-beta-D-manno-heptose-1,7-bisphosphate. Catalyzes the ADP transfer from ATP to D-glycero-beta-D-manno-heptose 1-phosphate, yielding ADP-D-glycero-beta-D-manno-heptose. This Bradyrhizobium sp. (strain ORS 278) protein is Bifunctional protein HldE.